We begin with the raw amino-acid sequence, 319 residues long: Tyrosine--tRNA ligase (319 aa).

L-tyrosine is bound at residue Y40. Residues 45–53 (PSGRIHMGH) carry the 'HIGH' region motif. 4 residues coordinate L-tyrosine: Y159, Q163, D166, and Q181. A 'KMSKS' region motif is present at residues 216-220 (KMSSS). S219 is a binding site for ATP.

The protein belongs to the class-I aminoacyl-tRNA synthetase family. TyrS type 3 subfamily. As to quaternary structure, homodimer.

It is found in the cytoplasm. The enzyme catalyses tRNA(Tyr) + L-tyrosine + ATP = L-tyrosyl-tRNA(Tyr) + AMP + diphosphate + H(+). Functionally, catalyzes the attachment of tyrosine to tRNA(Tyr) in a two-step reaction: tyrosine is first activated by ATP to form Tyr-AMP and then transferred to the acceptor end of tRNA(Tyr). The protein is Tyrosine--tRNA ligase of Methanococcus maripaludis (strain DSM 14266 / JCM 13030 / NBRC 101832 / S2 / LL).